Consider the following 126-residue polypeptide: Large ribosomal subunit protein bL17 (126 aa).

This sequence belongs to the bacterial ribosomal protein bL17 family. Part of the 50S ribosomal subunit. Contacts protein L32.

The protein is Large ribosomal subunit protein bL17 of Vibrio atlanticus (strain LGP32) (Vibrio splendidus (strain Mel32)).